The chain runs to 273 residues: Large ribosomal subunit protein uL2 (273 aa).

The interval 221–263 (RGTAMNPVDHPHGGGEGRNFGKHPVSPWGLKTKGKKTRRNKRT) is disordered. Over residues 252 to 263 (TKGKKTRRNKRT) the composition is skewed to basic residues.

Belongs to the universal ribosomal protein uL2 family. As to quaternary structure, part of the 50S ribosomal subunit. Forms a bridge to the 30S subunit in the 70S ribosome.

In terms of biological role, one of the primary rRNA binding proteins. Required for association of the 30S and 50S subunits to form the 70S ribosome, for tRNA binding and peptide bond formation. It has been suggested to have peptidyltransferase activity; this is somewhat controversial. Makes several contacts with the 16S rRNA in the 70S ribosome. The polypeptide is Large ribosomal subunit protein uL2 (Buchnera aphidicola subsp. Cinara cedri (strain Cc)).